A 156-amino-acid chain; its full sequence is ATP synthase subunit b (156 aa).

Residues 13–33 (AFIIFVWCCMKFVWPPLMAAI) traverse the membrane as a helical segment.

This sequence belongs to the ATPase B chain family. As to quaternary structure, F-type ATPases have 2 components, F(1) - the catalytic core - and F(0) - the membrane proton channel. F(1) has five subunits: alpha(3), beta(3), gamma(1), delta(1), epsilon(1). F(0) has three main subunits: a(1), b(2) and c(10-14). The alpha and beta chains form an alternating ring which encloses part of the gamma chain. F(1) is attached to F(0) by a central stalk formed by the gamma and epsilon chains, while a peripheral stalk is formed by the delta and b chains.

Its subcellular location is the cell inner membrane. F(1)F(0) ATP synthase produces ATP from ADP in the presence of a proton or sodium gradient. F-type ATPases consist of two structural domains, F(1) containing the extramembraneous catalytic core and F(0) containing the membrane proton channel, linked together by a central stalk and a peripheral stalk. During catalysis, ATP synthesis in the catalytic domain of F(1) is coupled via a rotary mechanism of the central stalk subunits to proton translocation. Functionally, component of the F(0) channel, it forms part of the peripheral stalk, linking F(1) to F(0). This chain is ATP synthase subunit b, found in Aeromonas salmonicida (strain A449).